A 347-amino-acid polypeptide reads, in one-letter code: Quinolinate synthase (347 aa).

Residues His-47 and Ser-68 each coordinate iminosuccinate. Cys-113 is a binding site for [4Fe-4S] cluster. Residues 139-141 (YAN) and Ser-156 contribute to the iminosuccinate site. Residue Cys-200 coordinates [4Fe-4S] cluster. Residues 226-228 (HPE) and Thr-243 each bind iminosuccinate. Cys-297 contributes to the [4Fe-4S] cluster binding site.

Belongs to the quinolinate synthase family. Type 1 subfamily. Requires [4Fe-4S] cluster as cofactor.

The protein localises to the cytoplasm. It catalyses the reaction iminosuccinate + dihydroxyacetone phosphate = quinolinate + phosphate + 2 H2O + H(+). The protein operates within cofactor biosynthesis; NAD(+) biosynthesis; quinolinate from iminoaspartate: step 1/1. Its function is as follows. Catalyzes the condensation of iminoaspartate with dihydroxyacetone phosphate to form quinolinate. The polypeptide is Quinolinate synthase (Shigella flexneri).